A 452-amino-acid polypeptide reads, in one-letter code: Phosphoglucosamine mutase (452 aa).

S103 functions as the Phosphoserine intermediate in the catalytic mechanism. Mg(2+) is bound by residues S103, D243, D245, and D247. S103 is modified (phosphoserine).

This sequence belongs to the phosphohexose mutase family. Mg(2+) serves as cofactor. Activated by phosphorylation.

It carries out the reaction alpha-D-glucosamine 1-phosphate = D-glucosamine 6-phosphate. Catalyzes the conversion of glucosamine-6-phosphate to glucosamine-1-phosphate. This is Phosphoglucosamine mutase from Lactobacillus acidophilus (strain ATCC 700396 / NCK56 / N2 / NCFM).